The following is a 27-amino-acid chain: Conotoxin Bt9.2 (27 aa).

Intrachain disulfides connect Cys-2-Cys-16, Cys-6-Cys-19, and Cys-12-Cys-24. Pro-13 is subject to 4-hydroxyproline.

As to expression, expressed by the venom duct.

Its subcellular location is the secreted. Its function is as follows. Probable neurotoxin that inhibits ion channels. In Conus betulinus (Beech cone), this protein is Conotoxin Bt9.2.